Consider the following 338-residue polypeptide: Aspartate carbamoyltransferase catalytic subunit (338 aa).

Carbamoyl phosphate is bound by residues R72 and T73. K100 is a binding site for L-aspartate. Carbamoyl phosphate is bound by residues R122, H152, and Q155. 2 residues coordinate L-aspartate: R186 and R243. Carbamoyl phosphate-binding residues include G284 and P285.

The protein belongs to the aspartate/ornithine carbamoyltransferase superfamily. ATCase family. As to quaternary structure, heterododecamer (2C3:3R2) of six catalytic PyrB chains organized as two trimers (C3), and six regulatory PyrI chains organized as three dimers (R2).

It catalyses the reaction carbamoyl phosphate + L-aspartate = N-carbamoyl-L-aspartate + phosphate + H(+). It functions in the pathway pyrimidine metabolism; UMP biosynthesis via de novo pathway; (S)-dihydroorotate from bicarbonate: step 2/3. Its function is as follows. Catalyzes the condensation of carbamoyl phosphate and aspartate to form carbamoyl aspartate and inorganic phosphate, the committed step in the de novo pyrimidine nucleotide biosynthesis pathway. The sequence is that of Aspartate carbamoyltransferase catalytic subunit from Acinetobacter baumannii (strain ACICU).